A 504-amino-acid polypeptide reads, in one-letter code: Ribosomal protein uS12 methylthiotransferase RimO (504 aa).

Residues K21–P131 form the MTTase N-terminal domain. [4Fe-4S] cluster-binding residues include C30, C66, C95, C186, C190, and C193. Residues L172–E408 enclose the Radical SAM core domain. Residues S411–E487 form the TRAM domain.

Belongs to the methylthiotransferase family. RimO subfamily. It depends on [4Fe-4S] cluster as a cofactor.

It is found in the cytoplasm. The catalysed reaction is L-aspartate(89)-[ribosomal protein uS12]-hydrogen + (sulfur carrier)-SH + AH2 + 2 S-adenosyl-L-methionine = 3-methylsulfanyl-L-aspartate(89)-[ribosomal protein uS12]-hydrogen + (sulfur carrier)-H + 5'-deoxyadenosine + L-methionine + A + S-adenosyl-L-homocysteine + 2 H(+). Its function is as follows. Catalyzes the methylthiolation of an aspartic acid residue of ribosomal protein uS12. The sequence is that of Ribosomal protein uS12 methylthiotransferase RimO from Deinococcus radiodurans (strain ATCC 13939 / DSM 20539 / JCM 16871 / CCUG 27074 / LMG 4051 / NBRC 15346 / NCIMB 9279 / VKM B-1422 / R1).